Here is a 2290-residue protein sequence, read N- to C-terminus: Protein Ycf2 (2290 aa).

1644-1651 (GSIGTGRS) serves as a coordination point for ATP.

Belongs to the Ycf2 family.

It localises to the plastid. The protein resides in the chloroplast stroma. Functionally, probable ATPase of unknown function. Its presence in a non-photosynthetic plant (Epifagus virginiana) and experiments in tobacco indicate that it has an essential function which is probably not related to photosynthesis. The polypeptide is Protein Ycf2 (Nasturtium officinale (Watercress)).